The sequence spans 434 residues: Trigger factor (434 aa).

Residues 161-246 (GKRVSIDFVG…VNKVEARELP (86 aa)) form the PPIase FKBP-type domain.

This sequence belongs to the FKBP-type PPIase family. Tig subfamily.

It localises to the cytoplasm. The enzyme catalyses [protein]-peptidylproline (omega=180) = [protein]-peptidylproline (omega=0). Involved in protein export. Acts as a chaperone by maintaining the newly synthesized protein in an open conformation. Functions as a peptidyl-prolyl cis-trans isomerase. This chain is Trigger factor, found in Vibrio parahaemolyticus serotype O3:K6 (strain RIMD 2210633).